Here is an 89-residue protein sequence, read N- to C-terminus: Long neurotoxin 1 (89 aa).

Residues M1–S21 form the signal peptide. 4 cysteine pairs are disulfide-bonded: C24–C41, C34–C58, C62–C74, and C75–C80.

Belongs to the three-finger toxin family. Long-chain subfamily. Type II alpha-neurotoxin sub-subfamily. In terms of tissue distribution, expressed by the venom gland.

It localises to the secreted. Its function is as follows. Binds with high affinity to muscular (alpha-1/CHRNA1) and neuronal (alpha-7/CHRNA7) nicotinic acetylcholine receptor (nAChR) and inhibits acetylcholine from binding to the receptor, thereby impairing neuromuscular and neuronal transmission. The sequence is that of Long neurotoxin 1 from Pseudonaja textilis (Eastern brown snake).